The primary structure comprises 691 residues: Dynamin-1-like protein (691 aa).

A Dynamin-type G domain is found at 22–301 (IIQLPQIAVV…LMHHIRDCLP (280 aa)). The G1 motif stretch occupies residues 32 to 39 (GTQSSGKS). 32–40 (GTQSSGKSS) provides a ligand contact to GTP. Residues 58–60 (VTR) are G2 motif. The tract at residues 145-148 (DLPG) is G3 motif. The tract at residues 214–217 (TKLD) is G4 motif. GTP-binding positions include 214 to 220 (TKLDLMD) and 245 to 248 (NRSQ). Residues 244–247 (VNRS) form a G5 motif region. The segment at 343-488 (YCNTIEGTAK…NEMVHNLVAI (146 aa)) is middle domain. Basic and acidic residues-rich tracts occupy residues 522–531 (LPTSVPRDKM) and 551–563 (KKGD…EKTK). The segment at 522–573 (LPTSVPRDKMAGGAQAEQEGGTGTWRGMLKKGDEGQGEEKTKLQSSIPASPQ) is disordered. One can recognise a GED domain in the interval 599 to 690 (CEVIERLIKS…VIAEIRETHL (92 aa)). The tract at residues 609–623 (YFLIVRKNIQDSVPK) is important for homodimerization.

This sequence belongs to the TRAFAC class dynamin-like GTPase superfamily. Dynamin/Fzo/YdjA family. As to quaternary structure, homotetramer; dimerizes through the N-terminal GTP-middle region of one molecule binding to the GED domain of another DNM1L molecule. Oligomerizes in a GTP-dependent manner to form membrane-associated tubules with a spiral pattern.

It localises to the cytoplasm. Its subcellular location is the cytosol. The protein localises to the golgi apparatus. It is found in the endomembrane system. The protein resides in the mitochondrion outer membrane. It localises to the peroxisome. Its subcellular location is the membrane. The protein localises to the clathrin-coated pit. It is found in the cytoplasmic vesicle. The protein resides in the secretory vesicle. It localises to the synaptic vesicle membrane. It catalyses the reaction GTP + H2O = GDP + phosphate + H(+). Its function is as follows. Functions in mitochondrial and peroxisomal division. Mediates membrane fission through oligomerization into membrane-associated tubular structures that wrap around the scission site to constrict and sever the mitochondrial membrane through a GTP hydrolysis-dependent mechanism. The specific recruitment at scission sites is mediated by membrane receptors like MFF, MIEF1 and MIEF2 for mitochondrial membranes. While the recruitment by the membrane receptors is GTP-dependent, the following hydrolysis of GTP induces the dissociation from the receptors and allows DNM1L filaments to curl into closed rings that are probably sufficient to sever a double membrane. May play a role in the circadian control of mitochondrial ATP production. This chain is Dynamin-1-like protein, found in Danio rerio (Zebrafish).